We begin with the raw amino-acid sequence, 79 residues long: uncharacterized protein (79 aa).

The disordered stretch occupies residues 51–79 (PAQFPKVQRPPTLLGGKNTSTQTTLHPVI). Residues 67-79 (KNTSTQTTLHPVI) show a composition bias toward polar residues.

This is an uncharacterized protein from Homo sapiens (Human).